The primary structure comprises 230 residues: Thymidylate synthase 1 (230 aa).

92 to 93 (RR) contacts dUMP. C112 acts as the Nucleophile in catalysis. Residues 132–135 (RSND), N143, and 173–175 (HVY) contribute to the dUMP site. D135 serves as a coordination point for (6R)-5,10-methylene-5,6,7,8-tetrahydrofolate.

The protein belongs to the thymidylate synthase family. Bacterial-type ThyA subfamily. In terms of assembly, homodimer.

It is found in the cytoplasm. The catalysed reaction is dUMP + (6R)-5,10-methylene-5,6,7,8-tetrahydrofolate = 7,8-dihydrofolate + dTMP. Its pathway is pyrimidine metabolism; dTTP biosynthesis. Functionally, catalyzes the reductive methylation of 2'-deoxyuridine-5'-monophosphate (dUMP) to 2'-deoxythymidine-5'-monophosphate (dTMP) while utilizing 5,10-methylenetetrahydrofolate (mTHF) as the methyl donor and reductant in the reaction, yielding dihydrofolate (DHF) as a by-product. This enzymatic reaction provides an intracellular de novo source of dTMP, an essential precursor for DNA biosynthesis. The polypeptide is Thymidylate synthase 1 (Bacillus amyloliquefaciens (Bacillus velezensis)).